Consider the following 64-residue polypeptide: Metallothionein (64 aa).

The protein belongs to the metallothionein superfamily. Type 4 family.

Metallothioneins have a high content of cysteine residues that bind various heavy metals. This is Metallothionein from Sterechinus neumayeri (Antarctic sea urchin).